Consider the following 195-residue polypeptide: dITP/XTP pyrophosphatase (195 aa).

Ser-7 to Lys-12 provides a ligand contact to substrate. Residues Glu-38 and Asp-68 each contribute to the Mg(2+) site. The active-site Proton acceptor is Asp-68. Substrate-binding positions include Ser-69, Phe-150–Asp-153, Lys-173, and His-178–Arg-179.

This sequence belongs to the HAM1 NTPase family. As to quaternary structure, homodimer. Mg(2+) serves as cofactor.

The catalysed reaction is XTP + H2O = XMP + diphosphate + H(+). It carries out the reaction dITP + H2O = dIMP + diphosphate + H(+). The enzyme catalyses ITP + H2O = IMP + diphosphate + H(+). Pyrophosphatase that catalyzes the hydrolysis of nucleoside triphosphates to their monophosphate derivatives, with a high preference for the non-canonical purine nucleotides XTP (xanthosine triphosphate), dITP (deoxyinosine triphosphate) and ITP. Seems to function as a house-cleaning enzyme that removes non-canonical purine nucleotides from the nucleotide pool, thus preventing their incorporation into DNA/RNA and avoiding chromosomal lesions. This chain is dITP/XTP pyrophosphatase, found in Nautilia profundicola (strain ATCC BAA-1463 / DSM 18972 / AmH).